The following is a 511-amino-acid chain: Signal transduction histidine-protein kinase/phosphatase MprB (511 aa).

At 1 to 26 (MVGFRRGPRAPLRATSSLSLRWRVML) the chain is on the cytoplasmic side. Residues 27-47 (LAMSMVAMVVVLMSFAVYAVI) traverse the membrane as a helical segment. The Extracellular portion of the chain corresponds to 48 to 163 (SAALYSDIDN…PTEAVMTKLR (116 aa)). The chain crosses the membrane as a helical span at residues 164 to 184 (AVLLIVGGVGVAVAAVAGGMV). At 185–511 (TRAGLRPVGR…SVDSQSARAR (327 aa)) the chain is on the cytoplasmic side. The HAMP domain maps to 186–238 (RAGLRPVGRLTEAAERVARTDDLRPIPVFGSDELARLTEAFNLMLRALAESRE). The region spanning 246-466 (DAGHELRTPL…AICMLLPGRP (221 aa)) is the Histidine kinase domain. His-249 bears the Phosphohistidine; by autocatalysis mark. Residues 468 to 511 (PDSAYPAAPDDKKTEPVDTRGANGANSRGSANVISVDSQSARAR) are disordered. Over residues 476–485 (PDDKKTEPVD) the composition is skewed to basic and acidic residues. The segment covering 491–511 (GANSRGSANVISVDSQSARAR) has biased composition (polar residues).

Requires Mg(2+) as cofactor. Mn(2+) serves as cofactor. In terms of processing, autophosphorylated.

The protein localises to the cell membrane. It catalyses the reaction ATP + protein L-histidine = ADP + protein N-phospho-L-histidine.. Functionally, member of the two-component regulatory system MprB/MprA which contributes to maintaining a balance among several systems involved in stress resistance and is required for establishment and maintenance of persistent infection in the host. In response to environmental signals MprB acts both as a membrane-associated protein kinase that undergoes autophosphorylation and subsequently transfers the phosphate to MprA, and a protein phosphatase that dephosphorylates phospho-MprA. The protein is Signal transduction histidine-protein kinase/phosphatase MprB (mprB) of Mycobacterium ulcerans (strain Agy99).